Consider the following 267-residue polypeptide: MNPIVPAVERPIEDVQAKADERQIAINKVGIKDIRHPVRVSDRNGGEQHTVANFNMYVDLPHHFKGTHMSRFVEILNQHEHEITVRSFREMLREMNHRLQAESGHIEMVFPYFVTKQAPVSKVQSLMDYQVTFIGEIKGDKPQITVKVVVPVTSLCPCSKQISDYGAHNQRSHVTVAVRIEGFIWLEDIIDLVEEEASCEIYGLLKRPDEKYVTERAYDNPKFVEDMVRDVAARLNQDDRVSAYRVESENFESIHNHSAYAMIEREK.

The protein belongs to the GTP cyclohydrolase IV family.

The enzyme catalyses GTP + H2O = 7,8-dihydroneopterin 3'-triphosphate + formate + H(+). The protein operates within cofactor biosynthesis; 7,8-dihydroneopterin triphosphate biosynthesis; 7,8-dihydroneopterin triphosphate from GTP: step 1/1. In terms of biological role, converts GTP to 7,8-dihydroneopterin triphosphate. This Nitrosococcus oceani (strain ATCC 19707 / BCRC 17464 / JCM 30415 / NCIMB 11848 / C-107) protein is GTP cyclohydrolase FolE2.